Consider the following 154-residue polypeptide: Protein-export protein SecB (154 aa).

This sequence belongs to the SecB family. As to quaternary structure, homotetramer, a dimer of dimers. One homotetramer interacts with 1 SecA dimer.

Its subcellular location is the cytoplasm. One of the proteins required for the normal export of preproteins out of the cell cytoplasm. It is a molecular chaperone that binds to a subset of precursor proteins, maintaining them in a translocation-competent state. It also specifically binds to its receptor SecA. The chain is Protein-export protein SecB from Blochmanniella pennsylvanica (strain BPEN).